Consider the following 232-residue polypeptide: Sugar fermentation stimulation protein homolog (232 aa).

Belongs to the SfsA family.

This chain is Sugar fermentation stimulation protein homolog, found in Magnetococcus marinus (strain ATCC BAA-1437 / JCM 17883 / MC-1).